A 400-amino-acid chain; its full sequence is MSSLHKSRIADFQDVLKEPSIALEKLRELSFSGIPCEGGLRCLCWKILLNYLPLERASWTSILAKQRELYAQFLREMIIQPGIAKANMGVSREDVTFEDHPLNPNPDSRWNTYFKDNEVLLQIDKDVRRLCPDISFFQRATDYPCLLILDPQNEFETLRKRVEQTTLKSQTVARNRSGVTNMSSPHKNSVPSSLNEYEVLPNGCEAHWEVVERILFIYAKLNPGIAYVQGMNEIVGPLYYTFATDPNSEWKEHAEADTFFCFTNLMAEIRDNFIKSLDDSQCGITYKMEKVYSTLKDKDVELYLKLQEQNIKPQFFAFRWLTLLLSQEFLLPDVIRIWDSLFADDNRFDFLLLVCCAMLMLIREQLLEGDFTVNMRLLQDYPITDVCQILQKAKELQDSK.

The Rab-GAP TBC domain occupies 35–345 (PCEGGLRCLC…RIWDSLFADD (311 aa)).

In terms of assembly, interacts with RAB1A and RAB10; in a GTP-dependent manner.

The protein localises to the membrane. The protein resides in the cytoplasm. Its function is as follows. Acts as a GTPase-activating protein for RAB35. Together with RAB35 may be involved in regulation of insulin-induced glucose transporter SLC2A4/GLUT4 translocation to the plasma membrane in adipocytes. The chain is TBC1 domain family member 13 (TBC1D13) from Homo sapiens (Human).